An 850-amino-acid polypeptide reads, in one-letter code: MPSINENEDIINKLKMSTITDDIIIQPSIDDLPYEEDVSKNPYSVNCWLRYLEFKQGSPQKQRNYIYERAIRELPRSYKIWHQYLLERTLAIRGKCILENSFEAVNTLFERSLVFLDKMPRIWIEYCEFLMIQEKITLTRKTFDRALIALPVTQHYRIWNEYTKFILKRSIPSLTCIRVYKRYLKIQPEKVEEYIEYLIKIKEWQEVVNQLIKLLDNVKFKSIKGKSRHDHWLQLCEILSSYPKQITGVDVDSVIRSGIGKFSDQIGKLWCYLSDYYIQLAQFEKARDIFEEALTSVGTARDFSFIWESYTQFEDSLIAAKQEILEEDPSEDNLLEFDIIIERYENLIQRQPLLLNSVMLKQNPNNVQEWLKRVNLYSNPTPNVKMIIQTFTDSIKSIDPQLAKGKLSTIYSTFAHFYEQNNKLSQARLIFENSLTVNFKTIDDLSTLYCDYAEMELKHRNYEKAIEILKRGTVSPKKQNTIIEENEPVQKRLFKSIKIWTFYVDLEESFGTFHNTKSIYEKMIQLKVVTPQIILNFAKYLEENKYFEDMFKAYEHGVQLFLFPHVQDIWITYLTKFIQRYAGMKLERTRDLFEQVLSKVPPKESIIFYLMYANFEEQYGLARHSMAVYDRAAKSVDKEDRFKMYLLYIHRASEFFGVNQTREIFSKAIEQLPDQYVRDMCLKFADMEKKYGEIDRARSIYIHGSQFSDPRTSMFYWNTWSDFEKLHGNEDTFKEMLRIRRSVQASYITQNPTLALLNKLNNKDDKDDKNQQQKQQQQQQEKQQQQQQQQQQASTLTKSKPVTVSLPETIQYNKKIENDDEINLDDDEEEEEEEDQLAIKAFPKTLLKII.

HAT repeat units lie at residues 25 to 57, 58 to 90, 100 to 132, 134 to 168, 171 to 203, 281 to 316, 477 to 509, 511 to 543, 545 to 579, 584 to 618, and 692 to 726; these read IQPSIDDLPYEEDVSKNPYSVNCWLRYLEFKQG, SPQKQRNYIYERAIRELPRSYKIWHQYLLERTL, NSFEAVNTLFERSLVFLDKMPRIWIEYCEFLMI, EKITLTRKTFDRALIALPVTQHYRIWNEYTKFILK, IPSLTCIRVYKRYLKIQPEKVEEYIEYLIKIKE, AQFEKARDIFEEALTSVGTARDFSFIWESYTQFEDS, KKQNTIIEENEPVQKRLFKSIKIWTFYVDLEES, GTFHNTKSIYEKMIQLKVVTPQIILNFAKYLEE, KYFEDMFKAYEHGVQLFLFPHVQDIWITYLTKFIQ, MKLERTRDLFEQVLSKVPPKESIIFYLMYANFEEQ, and GEIDRARSIYIHGSQFSDPRTSMFYWNTWSDFEKL. Over residues 761–771 the composition is skewed to basic and acidic residues; that stretch reads NNKDDKDDKNQ. Residues 761 to 837 are disordered; that stretch reads NNKDDKDDKN…EEEEEEEDQL (77 aa). The segment covering 772–792 has biased composition (low complexity); it reads QQKQQQQQQEKQQQQQQQQQQ. Polar residues predominate over residues 793 to 812; that stretch reads ASTLTKSKPVTVSLPETIQY. Acidic residues predominate over residues 818-836; the sequence is NDDEINLDDDEEEEEEEDQ.

This sequence belongs to the crooked-neck family. Identified in the spliceosome C complex.

It localises to the nucleus. Its function is as follows. Involved in pre-mRNA splicing as component of the spliceosome. Involved in transcription-coupled repair (TCR), transcription and pre-mRNA splicing. This Dictyostelium discoideum (Social amoeba) protein is Pre-mRNA-splicing factor SYF1 (xab2).